A 111-amino-acid polypeptide reads, in one-letter code: uncharacterized protein (111 aa).

It belongs to the asfivirus E111R family.

This is an uncharacterized protein from Ornithodoros (relapsing fever ticks).